We begin with the raw amino-acid sequence, 294 residues long: Survival motor neuron protein (294 aa).

Residues 1-12 (MAMSSGGSGGGV) show a composition bias toward gly residues. The interval 1 to 32 (MAMSSGGSGGGVPEQEDSVLFRRGTGQSDDSD) is disordered. Ala2 is subject to N-acetylalanine. Ser4, Ser5, and Ser8 each carry phosphoserine; by PKA. Thr25 is subject to Phosphothreonine. The interval 26–51 (GQSDDSDIWDDTALIKAYDKAVASFK) is interacts with GEMIN2. Phosphoserine occurs at positions 28 and 31. Lys51 participates in a covalent cross-link: Glycyl lysine isopeptide (Lys-Gly) (interchain with G-Cter in SUMO2). Positions 59–88 (ICETSGKPKTTPKRKPAKKNKSQKKNTAAS) are disordered. The span at 68 to 82 (TTPKRKPAKKNKSQK) shows a compositional bias: basic residues. Thr69 carries the post-translational modification Phosphothreonine. Residue Thr85 is modified to Phosphothreonine; by PKA. The 61-residue stretch at 91 to 151 (QWKVGDKCSA…LSPICEVANN (61 aa)) folds into the Tudor domain. The tract at residues 97–209 (KCSAIWSEDG…MPGPRLGPGK (113 aa)) is required for interaction with RPP20/POP7. Low complexity predominate over residues 156–166 (AQENENESQVS). Positions 156-222 (AQENENESQV…KFNGPPPPPP (67 aa)) are disordered. Ser187 bears the Phosphoserine; by PKA mark. The segment covering 194-204 (LPPPPPMPGPR) has biased composition (pro residues). A compositionally biased stretch (low complexity) spans 206–215 (GPGKPGLKFN). Lys209 is covalently cross-linked (Glycyl lysine isopeptide (Lys-Gly) (interchain with G-Cter in SUMO2)). Residues 240–267 (PPIIPPPPPICPDSLDDADALGSMLISW) form a P2 (binding site for SNRPB) region. Positions 252-280 (DSLDDADALGSMLISWYMSGYHTGYYMGF) are involved in homooligomerization. The tract at residues 279 to 294 (GFRQNQKEGRCSHSLN) is required for interaction with SYNCRIP.

The protein belongs to the SMN family. In terms of assembly, homooligomer; may form higher order homooligomers in the dimer to octamer range. Part of the core SMN complex that contains SMN1, GEMIN2/SIP1, DDX20/GEMIN3, GEMIN4, GEMIN5, GEMIN6, GEMIN7, GEMIN8 and STRAP/UNRIP. Part of the SMN-Sm complex that contains SMN1, GEMIN2/SIP1, DDX20/GEMIN3, GEMIN4, GEMIN5, GEMIN6, GEMIN7, GEMIN8, STRAP/UNRIP and the Sm proteins SNRPB, SNRPD1, SNRPD2, SNRPD3, SNRPE, SNRPF and SNRPG. Component of an import snRNP complex composed of KPNB1, RNUT1, SMN1 and ZNF259. Interacts with DDX20, FBL, NOLA1, RNUT1, SYNCRIP and with several spliceosomal snRNP core Sm proteins, including SNRPB, SNRPD1, SNRPD2, SNRPD3, SNRPE and ILF3. Interacts with GEMIN2; the interaction is direct. Interacts with GEMIN3; the interaction is direct. Interacts with GEMIN8; the interaction is direct. Interacts with SNRPB; the interaction is direct. Interacts (via Tudor domain) with SNRPD1 (via C-terminus); the interaction is direct. Interacts with SNRPD2; the interaction is direct. Interacts (via Tudor domain) with SNRPD3 (via C-terminus); the interaction is direct. Interacts with SNRPE; the interaction is direct. Interacts with OSTF1, LSM10, LSM11 and RPP20/POP7. Interacts (via C-terminal region) with ZPR1 (via C-terminal region). Interacts (via Tudor domain) with COIL. Interacts with SETX; recruits SETX to POLR2A. Interacts with POLR2A (via the C-terminal domain (CTD)). Interacts with PRMT5. Interacts with XRN2. Interacts (via C-terminus) with FMR1 (via C-terminus); the interaction is direct and occurs in a RNA-independent manner. Interacts (via Tudor domain) with SF3B2 ('Arg-508'-methylated form). Interacts with WRAP53/TCAB1. Interacts (via Tudor domain) with ELAVL4 in an RNA-independent manner; the interaction is required for localization of ELAVL4 to RNA granules. Interacts with FRG1. As to quaternary structure, does not homooligomerize. Does not interact with SNRPB. Expressed in a wide variety of tissues. Expressed at high levels in brain, kidney and liver, moderate levels in skeletal and cardiac muscle, and low levels in fibroblasts and lymphocytes. Also seen at high levels in spinal cord. Present in osteoclasts and mononuclear cells (at protein level).

It is found in the nucleus. The protein resides in the gem. The protein localises to the cajal body. Its subcellular location is the cytoplasm. It localises to the cytoplasmic granule. It is found in the perikaryon. The protein resides in the cell projection. The protein localises to the neuron projection. Its subcellular location is the axon. It localises to the myofibril. It is found in the sarcomere. The protein resides in the z line. Its function is as follows. The SMN complex catalyzes the assembly of small nuclear ribonucleoproteins (snRNPs), the building blocks of the spliceosome, and thereby plays an important role in the splicing of cellular pre-mRNAs. Most spliceosomal snRNPs contain a common set of Sm proteins SNRPB, SNRPD1, SNRPD2, SNRPD3, SNRPE, SNRPF and SNRPG that assemble in a heptameric protein ring on the Sm site of the small nuclear RNA to form the core snRNP (Sm core). In the cytosol, the Sm proteins SNRPD1, SNRPD2, SNRPE, SNRPF and SNRPG are trapped in an inactive 6S pICln-Sm complex by the chaperone CLNS1A that controls the assembly of the core snRNP. To assemble core snRNPs, the SMN complex accepts the trapped 5Sm proteins from CLNS1A forming an intermediate. Within the SMN complex, SMN1 acts as a structural backbone and together with GEMIN2 it gathers the Sm complex subunits. Binding of snRNA inside 5Sm ultimately triggers eviction of the SMN complex, thereby allowing binding of SNRPD3 and SNRPB to complete assembly of the core snRNP. Ensures the correct splicing of U12 intron-containing genes that may be important for normal motor and proprioceptive neurons development. Also required for resolving RNA-DNA hybrids created by RNA polymerase II, that form R-loop in transcription terminal regions, an important step in proper transcription termination. May also play a role in the metabolism of small nucleolar ribonucleoprotein (snoRNPs). The chain is Survival motor neuron protein (SMN1) from Homo sapiens (Human).